The following is a 161-amino-acid chain: DNA-directed RNA polymerase 18 kDa subunit (161 aa).

The protein belongs to the poxviridae DNA-directed RNA polymerase 18 kDa subunit family. As to quaternary structure, the DNA-dependent RNA polymerase used for intermediate and late genes expression consists of eight subunits Rpo30/OPG66, Rpo7/OPG90, Rpo22/OPG103, Rpo147/OPG105, Rpo18/OPG119, Rpo19/OPG131, Rpo132/OPG151 and Rpo35/OPG156. The same holoenzyme, with the addition of the transcription-specificity factor OPG109, is used for early gene expression.

The protein resides in the virion. It carries out the reaction RNA(n) + a ribonucleoside 5'-triphosphate = RNA(n+1) + diphosphate. Its function is as follows. Part of the DNA-dependent RNA polymerase which catalyzes the transcription of viral DNA into RNA using the four ribonucleoside triphosphates as substrates. Responsible for the transcription of early, intermediate and late genes. DNA-dependent RNA polymerase associates with the early transcription factor (ETF), itself composed of OPG118 and OPG133, thereby allowing the early genes transcription. Late transcription, and probably also intermediate transcription, require newly synthesized RNA polymerase. The protein is DNA-directed RNA polymerase 18 kDa subunit (OPG119) of Vaccinia virus (strain Ankara) (VACV).